The sequence spans 565 residues: MGDMQMSVVDPTWELLDPNPDIRALFLEFNDTFFWGQLSGVEVKWSARMTLCAGVCSYEGRGGLCSIRLSEPLLKLRPRKDLVETLLHEMIHALLFVTHNNKDHDSHGPEFCKHMERINGRTGANISVYHNFHDEVDEYRKHWWLCNGPCQKRKPYFGYVKRAMNRAPSSLDPWWADHQRTCGGSFVKVKEPENYPQKRKRKNDPTISEVNSSSHVKGKSNGVDIRTVIPFSGTGYKLFEPNKSDAPLKILNINPTKDKAAVPLLNHTPPSTNINGTFLTNKIGSAKSTPAQSILTKVSVANTKVFINLNGSPIKLPSGSKNKSHQISSKQKSVLPFFKMQKDNSFDLTLPSPSIQSTSQKPQKDISFGFTLPSQSFPSTSPGSNSENKEPLYKKLQMNDRESFIIHSGNKTNVNDNKSCTGPAATTASGLNHTIKVSCPVCGTEVLECKINDHLDTCTSSGPQKDILLDVSLPLQSFPSTSQGSNSAIKEPLYKKLQINDKDSFIIHSGNKTNVNDNKSCTRPAATTASGFNHTIKVCCPVCGTDVLQDKINDHLDTCLQNCNT.

In terms of domain architecture, SprT-like spans 23 to 130 (RALFLEFNDT…RTGANISVYH (108 aa)). Residue histidine 88 coordinates Zn(2+). Glutamate 89 is an active-site residue. Histidine 92 and histidine 107 together coordinate Zn(2+). Residues 191–219 (EPENYPQKRKRKNDPTISEVNSSSHVKGK) form a disordered region. Over residues 205-215 (PTISEVNSSSH) the composition is skewed to polar residues. The SHP-box signature appears at 231 to 239 (FSGTGYKLF). The PIP-box motif lies at 288–295 (STPAQSIL). A disordered region spans residues 349–389 (TLPSPSIQSTSQKPQKDISFGFTLPSQSFPSTSPGSNSENK). Polar residues-rich tracts occupy residues 351-361 (PSPSIQSTSQK) and 372-386 (LPSQ…GSNS). The UBZ4-type 1 zinc finger occupies 436-463 (KVSCPVCGTEVLECKINDHLDTCTSSGP). The Zn(2+) site is built by cysteine 439, cysteine 442, histidine 454, and cysteine 458. The short motif at 476-499 (QSFPSTSQGSNSAIKEPLYKKLQI) is the Nuclear localization signal element. Residues 537 to 564 (KVCCPVCGTDVLQDKINDHLDTCLQNCN) form a UBZ4-type 2 zinc finger. 4 residues coordinate Zn(2+): cysteine 540, cysteine 543, histidine 555, and cysteine 559.

This sequence belongs to the Spartan family. In terms of assembly, homodimer. The cofactor is Zn(2+). Autocatalytically cleaved in response to double-stranded DNA-binding: autocatalytic cleavage takes place in trans and leads to inactivation.

The protein localises to the nucleus. Its subcellular location is the chromosome. With respect to regulation, DNA-binding activates the protease activity: single-stranded DNA-binding specifically activates ability to cleave covalent DNA-protein cross-links (DPCs). In contrast, double-stranded DNA-binding specifically activates autocatalytic cleavage, and subsequent inactivation. Its function is as follows. DNA-dependent metalloendopeptidase that mediates the proteolytic cleavage of covalent DNA-protein cross-links (DPCs) during DNA synthesis, thereby playing a key role in maintaining genomic integrity. DPCs are highly toxic DNA lesions that interfere with essential chromatin transactions, such as replication and transcription, and which are induced by reactive agents, such as UV light or formaldehyde. Associates with the DNA replication machinery and specifically removes DPCs during DNA synthesis. Catalyzes proteolytic cleavage of the hmces DNA-protein cross-link following unfolding by the brip1/fancj helicase. Acts as a pleiotropic protease for DNA-binding proteins cross-linked with DNA, such as top1, top2a, histones H3 and H4. Mediates degradation of DPCs that are not ubiquitinated, while it is not able to degrade ubiquitinated DPCs. SPRTN activation requires polymerase collision with DPCs followed by helicase bypass of DPCs. May also act as a 'reader' of ubiquitinated pcna: facilitates chromatin association of rad18 and is required for efficient pcna monoubiquitination, promoting a feed-forward loop to enhance pcna ubiquitination and translesion DNA synthesis. Acts as a regulator of translesion DNA synthesis by recruiting vcp/p97 to sites of DNA damage. In Xenopus laevis (African clawed frog), this protein is DNA-dependent metalloprotease SPRTN.